An 83-amino-acid polypeptide reads, in one-letter code: UPF0457 protein YnzG (83 aa).

This sequence belongs to the UPF0457 family.

In Bacillus subtilis (strain 168), this protein is UPF0457 protein YnzG (ynzG).